Reading from the N-terminus, the 236-residue chain is 7-cyano-7-deazaguanine synthase (236 aa).

Residue 21 to 31 participates in ATP binding; sequence LSGGLDSATVL. Positions 202, 212, 215, and 218 each coordinate Zn(2+).

The protein belongs to the QueC family. Zn(2+) serves as cofactor.

It catalyses the reaction 7-carboxy-7-deazaguanine + NH4(+) + ATP = 7-cyano-7-deazaguanine + ADP + phosphate + H2O + H(+). Its pathway is purine metabolism; 7-cyano-7-deazaguanine biosynthesis. Functionally, catalyzes the ATP-dependent conversion of 7-carboxy-7-deazaguanine (CDG) to 7-cyano-7-deazaguanine (preQ(0)). This chain is 7-cyano-7-deazaguanine synthase, found in Frankia casuarinae (strain DSM 45818 / CECT 9043 / HFP020203 / CcI3).